The chain runs to 222 residues: MGQKINPNGFRLGVNRDWEAKWYADKNYADTLNEDLRIRKFISEKLADASVSTVEIERAANRINISIHTAKPGMVIGKGGKEVEALRKQLSALTKKNVHINIVEIKKPDLDAKLVGEGIARQLEARIAFRRATRQATQRSMRSGAKGIKVQTAGRLNGADMARREWHTEGSVPLHTLRADIDYAWVEAATTYGQIGVKVWINRGEILPQRKNKPSKKTKGGN.

The 69-residue stretch at 38-106 (IRKFISEKLA…NVHINIVEIK (69 aa)) folds into the KH type-2 domain.

Belongs to the universal ribosomal protein uS3 family. As to quaternary structure, part of the 30S ribosomal subunit. Forms a tight complex with proteins S10 and S14.

In terms of biological role, binds the lower part of the 30S subunit head. Binds mRNA in the 70S ribosome, positioning it for translation. The chain is Small ribosomal subunit protein uS3 from Lactobacillus gasseri (strain ATCC 33323 / DSM 20243 / BCRC 14619 / CIP 102991 / JCM 1131 / KCTC 3163 / NCIMB 11718 / NCTC 13722 / AM63).